Here is a 509-residue protein sequence, read N- to C-terminus: GMP synthase [glutamine-hydrolyzing] (509 aa).

One can recognise a Glutamine amidotransferase type-1 domain in the interval 4 to 193 (KILILDFGSQ…VVHICGCSQD (190 aa)). C79 acts as the Nucleophile in catalysis. Residues H167 and E169 contribute to the active site. The GMPS ATP-PPase domain maps to 194 to 384 (WTPDAFVETT…LGIDDIILKR (191 aa)). An ATP-binding site is contributed by 221-227 (SGGVDSS).

In terms of assembly, homodimer.

It catalyses the reaction XMP + L-glutamine + ATP + H2O = GMP + L-glutamate + AMP + diphosphate + 2 H(+). It functions in the pathway purine metabolism; GMP biosynthesis; GMP from XMP (L-Gln route): step 1/1. Functionally, catalyzes the synthesis of GMP from XMP. This chain is GMP synthase [glutamine-hydrolyzing], found in Cytophaga hutchinsonii (strain ATCC 33406 / DSM 1761 / CIP 103989 / NBRC 15051 / NCIMB 9469 / D465).